A 165-amino-acid chain; its full sequence is Small ribosomal subunit protein uS5 (165 aa).

Positions 13-76 (LEEKVLVVNR…EAARKNLITI (64 aa)) constitute an S5 DRBM domain.

Belongs to the universal ribosomal protein uS5 family. In terms of assembly, part of the 30S ribosomal subunit. Contacts proteins S4 and S8.

Its function is as follows. With S4 and S12 plays an important role in translational accuracy. Located at the back of the 30S subunit body where it stabilizes the conformation of the head with respect to the body. The sequence is that of Small ribosomal subunit protein uS5 from Chlamydia abortus (strain DSM 27085 / S26/3) (Chlamydophila abortus).